The sequence spans 273 residues: 5-deoxy-glucuronate isomerase (273 aa).

Belongs to the isomerase IolB family.

The catalysed reaction is 5-deoxy-D-glucuronate = 5-dehydro-2-deoxy-D-gluconate. It functions in the pathway polyol metabolism; myo-inositol degradation into acetyl-CoA; acetyl-CoA from myo-inositol: step 4/7. Functionally, involved in the isomerization of 5-deoxy-glucuronate (5DG) to 5-dehydro-2-deoxy-D-gluconate (DKG or 2-deoxy-5-keto-D-gluconate). This Listeria monocytogenes serotype 4b (strain CLIP80459) protein is 5-deoxy-glucuronate isomerase.